Consider the following 114-residue polypeptide: Amphinase-1 (114 aa).

Residue histidine 15 is the Proton acceptor of the active site. 4 disulfide bridges follow: cysteine 26–cysteine 79, cysteine 41–cysteine 85, cysteine 59–cysteine 100, and cysteine 97–cysteine 114. N-linked (GlcNAc...) asparagine glycosylation occurs at asparagine 27. 42 to 46 lines the substrate pocket; that stretch reads KPVNT. N-linked (GlcNAc...) asparagine glycosylation is found at asparagine 67 and asparagine 91. Histidine 107 acts as the Proton donor in catalysis.

The protein belongs to the pancreatic ribonuclease family. Monomer. There are at least five different forms arising from glycan heterogeneity.

The protein resides in the secreted. In terms of biological role, endonuclease, hydrolyzes highly polymerized RNA, poly(U) and poly(C), and the dinucleotides CpA and UpA. More active towards rCA than rUA or rUG. Has cytotoxic activity against cultured human submaxillary gland carcinoma cells. The polypeptide is Amphinase-1 (Lithobates pipiens (Northern leopard frog)).